Consider the following 201-residue polypeptide: Potassium-transporting ATPase KdpC subunit (201 aa).

The chain crosses the membrane as a helical span at residues 7-29 (PALVLLTALTAITGLAYPLAMTG).

The protein belongs to the KdpC family. The system is composed of three essential subunits: KdpA, KdpB and KdpC.

The protein localises to the cell inner membrane. Part of the high-affinity ATP-driven potassium transport (or Kdp) system, which catalyzes the hydrolysis of ATP coupled with the electrogenic transport of potassium into the cytoplasm. This subunit acts as a catalytic chaperone that increases the ATP-binding affinity of the ATP-hydrolyzing subunit KdpB by the formation of a transient KdpB/KdpC/ATP ternary complex. The sequence is that of Potassium-transporting ATPase KdpC subunit from Methylobacterium radiotolerans (strain ATCC 27329 / DSM 1819 / JCM 2831 / NBRC 15690 / NCIMB 10815 / 0-1).